Consider the following 272-residue polypeptide: HMP-PP phosphatase (272 aa).

Asp8 serves as the catalytic Nucleophile. The Mg(2+) site is built by Asp8, Asp10, and Asp212.

The protein belongs to the HAD-like hydrolase superfamily. Cof family. Mg(2+) is required as a cofactor.

The catalysed reaction is 4-amino-2-methyl-5-(diphosphooxymethyl)pyrimidine + H2O = 4-amino-2-methyl-5-(phosphooxymethyl)pyrimidine + phosphate + H(+). Catalyzes the hydrolysis of 4-amino-2-methyl-5-hydroxymethylpyrimidine pyrophosphate (HMP-PP) to 4-amino-2-methyl-5-hydroxymethylpyrimidine phosphate (HMP-P). The chain is HMP-PP phosphatase from Citrobacter koseri (strain ATCC BAA-895 / CDC 4225-83 / SGSC4696).